Reading from the N-terminus, the 328-residue chain is Malate dehydrogenase (328 aa).

11–17 (GAAGQIG) lines the NAD(+) pocket. Residues Arg-92 and Arg-98 each coordinate substrate. NAD(+) contacts are provided by residues Asn-105, Gln-112, and 129–131 (VGN). Asn-131 and Arg-162 together coordinate substrate. His-187 acts as the Proton acceptor in catalysis.

The protein belongs to the LDH/MDH superfamily. MDH type 2 family.

The catalysed reaction is (S)-malate + NAD(+) = oxaloacetate + NADH + H(+). Catalyzes the reversible oxidation of malate to oxaloacetate. This is Malate dehydrogenase from Coxiella burnetii (strain CbuK_Q154) (Coxiella burnetii (strain Q154)).